The following is a 270-amino-acid chain: Thymidine kinase 2, mitochondrial (270 aa).

The N-terminal 38 residues, 1 to 38 (MLLRSLRSWAARSPRSVGPGSSGSPGSLDSGAGPLWAP), are a transit peptide targeting the mitochondrion. The interval 1–54 (MLLRSLRSWAARSPRSVGPGSSGSPGSLDSGAGPLWAPRRAWPPDKDRENDKEK) is disordered. The segment covering 13–34 (SPRSVGPGSSGSPGSLDSGAGP) has biased composition (low complexity). Residues 42 to 54 (WPPDKDRENDKEK) show a composition bias toward basic and acidic residues. Residue 62-70 (GNIASGKTT) participates in ATP binding. The Proton acceptor role is filled by E138.

The protein belongs to the DCK/DGK family. In terms of assembly, homodimer. As to expression, found in most tissues; highly expressed in liver.

The protein localises to the mitochondrion. The catalysed reaction is thymidine + ATP = dTMP + ADP + H(+). The enzyme catalyses 2'-deoxycytidine + ATP = dCMP + ADP + H(+). It carries out the reaction 2'-deoxyuridine + ATP = dUMP + ADP + H(+). Its function is as follows. Phosphorylates thymidine, deoxycytidine, and deoxyuridine in the mitochondrial matrix. In non-replicating cells, where cytosolic dNTP synthesis is down-regulated, mtDNA synthesis depends solely on TK2 and DGUOK. The sequence is that of Thymidine kinase 2, mitochondrial (Tk2) from Mus musculus (Mouse).